Reading from the N-terminus, the 250-residue chain is Pre-protein VI (250 aa).

Positions 1–33 (MEDINFASLAPRHGSRPFMGNWQDIGTSNMSGG) are excised as a propeptide. The segment at 34 to 54 (AFSWGSLWSGIKNFGSTIKNY) is amphipathic alpha-helix essential for membrane lytic activity. The segment at 36-53 (SWGSLWSGIKNFGSTIKN) is involved in endosomal membrane lysis. The interaction with hexon protein stretch occupies residues 48-74 (GSTIKNYGSKAWNSSTGQMLRDKLKEQ). The Nuclear export signal signature appears at 67 to 76 (LRDKLKEQNF). The interval 103 to 147 (INSKLDPRPPVEEPPPAVETVSPEGRGEKRPRPDREETLVTQIDE) is disordered. Position 124 is a phosphoserine; by host (serine 124). Over residues 127–140 (GRGEKRPRPDREET) the composition is skewed to basic and acidic residues. The short motif at 131 to 135 (KRPRP) is the Nuclear localization signal element. Position 143 is a phosphothreonine; by host (threonine 143). Positions 148-151 (PPSY) match the PPXY motif motif. Positions 206–220 (PSRASLRRAASGPRS) are enriched in low complexity. Residues 206 to 226 (PSRASLRRAASGPRSMRPVAS) are disordered. A Nuclear export signal motif is present at residues 231 to 242 (STLNSIVGLGVQ). Residues 233 to 239 (LNSIVGL) are interaction with hexon protein. The interval 240-250 (GVQSLKRRRCF) is binds to importin alpha/beta, involved in hexon nuclear import. The short motif at 245-248 (KRRR) is the Nuclear localization signal element.

It belongs to the adenoviridae protein VI family. As to quaternary structure, interacts with hexon protein; this interaction allows nuclear import of hexon trimers and possibly pre-capsid assembly. Interacts (via C-terminal NLS) with importin alpha/beta. Interacts (via PPxY motif) with host NEDD4 ubiquitine ligase; this interaction might play a role in virus intracellular transport during entry. Part of a complex composed of the core-capsid bridging protein, the endosome lysis protein VI and the hexon-linking protein VIII; these interactions bridge the virus core to the capsid. Interacts with peripentonal hexons; this interaction stabilizes the capsid by gluing two peripentonal hexons together and joining them with an adjacent group-of-nine hexon. In terms of assembly, heterodimer with the viral protease; disulfide-linked. Interacts with the viral protease. In terms of processing, ubiquitinated by Nedd4 following partial capsid disassembly; which might play a role in intracellular virus movement during entry. Contains the major nuclear import and export signals. Proteolytically removed during virion maturation. The processing of the C-terminus turns the precursor into a mature viral structural protein and abrogates its ability to promote hexon import and act as a potential chaperone protein.

It localises to the host nucleus. The protein localises to the host cytoplasm. The protein resides in the virion. Functionally, during virus assembly, promotes hexon trimers nuclear import through nuclear pore complexes via an importin alpha/beta-dependent mechanism. By analogy to herpesviruses capsid assembly, might act as a chaperone to promote the formation of the icosahedral capsid. Structural component of the virion that provides increased stability to the particle shell through its interaction with the core-capsid bridging protein and the hexon-linking protein VIII. Fibers shedding during virus entry into host cell allows the endosome lysis protein to be exposed as a membrane-lytic peptide. Exhibits pH-independent membrane fragmentation activity and probably mediates viral rapid escape from host endosome via organellar membrane lysis. It is not clear if it then remains partially associated with the capsid and involved in the intracellular microtubule-dependent transport of capsid to the nucleus, or if it is lost during endosomal penetration. In terms of biological role, cofactor that activates the viral protease. Binds to viral protease in a 1:1 ratio. The protein is Pre-protein VI of Human adenovirus C serotype 2 (HAdV-2).